Reading from the N-terminus, the 237-residue chain is 3-oxoacyl-[acyl-carrier-protein] reductase (237 aa).

At Met-1 the chain carries N-acetylmethionine. NADP(+) contacts are provided by residues 11–14 (SRGI) and 34–35 (RN). Lys-40 is subject to N6-acetyllysine. Residues Asp-56 and 83–85 (AAG) each bind NADP(+). Lys-96 carries the post-translational modification N6-acetyllysine. Ser-135 contributes to the substrate binding site. NADP(+) contacts are provided by residues Tyr-148, Lys-152, and 181 to 183 (VHT). The active-site Proton acceptor is the Tyr-148. Lys-195 is modified (N6-acetyllysine).

This sequence belongs to the short-chain dehydrogenases/reductases (SDR) family. In terms of assembly, homotetramer (in vitro). Heterotetramer with HSD17B8; contains two molecules each of HSD17B8 and CBR4. Does not form homotetramers when HSD17B8 is coexpressed, only heterotetramers (in vitro). In terms of tissue distribution, detected in liver and kidney (at protein level). Displays the highest expression in neuronal and muscle tissues.

It is found in the mitochondrion matrix. The catalysed reaction is a (3R)-hydroxyacyl-[ACP] + NADP(+) = a 3-oxoacyl-[ACP] + NADPH + H(+). It carries out the reaction a quinone + NADPH + H(+) = a quinol + NADP(+). It functions in the pathway lipid metabolism; fatty acid biosynthesis. Functionally, component of the heterotetramer complex KAR (3-ketoacyl-[acyl carrier protein] reductase or 3-ketoacyl-[ACP] reductase) that forms part of the mitochondrial fatty acid synthase (mtFAS). Beta-subunit of the KAR heterotetramer complex, responsible for the 3-ketoacyl-ACP reductase activity of the mtFAS, reduces 3-oxoacyl-[ACP] to (3R)-hydroxyacyl-[ACP] in a NADPH-dependent manner with no chain length preference, thereby participating in mitochondrial fatty acid biosynthesis. The homotetramer has NADPH-dependent quinone reductase activity (in vitro), hence could play a role in protection against cytotoxicity of exogenous quinones. As a heterotetramer, it can also reduce 9,10-phenanthrenequinone, 1,4-benzoquinone and various other o-quinones and p-quinones (in vitro). The sequence is that of 3-oxoacyl-[acyl-carrier-protein] reductase (CBR4) from Homo sapiens (Human).